A 479-amino-acid chain; its full sequence is Sulfate adenylyltransferase subunit 1 (479 aa).

The region spanning 25-239 (KSLLRFLTCG…EVLETVDIQR (215 aa)) is the tr-type G domain. Positions 34–41 (GSVDDGKS) are G1. A GTP-binding site is contributed by 34-41 (GSVDDGKS). The G2 stretch occupies residues 92–96 (GITID). The G3 stretch occupies residues 113 to 116 (DTPG). GTP contacts are provided by residues 113 to 117 (DTPGH) and 168 to 171 (NKMD). The tract at residues 168-171 (NKMD) is G4. The tract at residues 206 to 208 (SAL) is G5.

Belongs to the TRAFAC class translation factor GTPase superfamily. Classic translation factor GTPase family. CysN/NodQ subfamily. In terms of assembly, heterodimer composed of CysD, the smaller subunit, and CysN.

It catalyses the reaction sulfate + ATP + H(+) = adenosine 5'-phosphosulfate + diphosphate. It participates in sulfur metabolism; hydrogen sulfide biosynthesis; sulfite from sulfate: step 1/3. Its function is as follows. With CysD forms the ATP sulfurylase (ATPS) that catalyzes the adenylation of sulfate producing adenosine 5'-phosphosulfate (APS) and diphosphate, the first enzymatic step in sulfur assimilation pathway. APS synthesis involves the formation of a high-energy phosphoric-sulfuric acid anhydride bond driven by GTP hydrolysis by CysN coupled to ATP hydrolysis by CysD. The chain is Sulfate adenylyltransferase subunit 1 from Salmonella typhi.